The chain runs to 55 residues: Chromatin protein Cren7 (55 aa).

This sequence belongs to the Cren7 family. In terms of assembly, monomer. In terms of processing, methylated at multiple sites, to varying extents.

The protein resides in the chromosome. It localises to the cytoplasm. Its function is as follows. A chromatin protein, binds double-stranded DNA without sequence specificity. Constrains negative DNA supercoils. In Ignicoccus hospitalis (strain KIN4/I / DSM 18386 / JCM 14125), this protein is Chromatin protein Cren7.